The sequence spans 349 residues: Insulin gene enhancer protein ISL-1 (349 aa).

LIM zinc-binding domains lie at 17 to 70 and 79 to 133; these read CVGC…CKRD and CAKC…RADH. Residues 181-240 constitute a DNA-binding region (homeobox); sequence TTRVRTVLNEKQLHTLRTCYAANPRPDALMKEQLVEMTGLSPRVIRVWFQNKRCKDKKRS. Residues 262–291 are LIM-binding domain (LID); that stretch reads GTPMVAASPERHDGGLQANPVEVQSYQPPW. The tract at residues 312 to 349 is disordered; that stretch reads VNFSEGGPGSNSTGSEVASMSSQLPDTPNSMVASPIEA. Over residues 321-343 the composition is skewed to polar residues; the sequence is SNSTGSEVASMSSQLPDTPNSMV.

As to quaternary structure, at neuronal promoters, displaces LDB1 from LHX3 LIM domain to form a ternary complex in which ISL1 contacts both LHX3 and LDB1; allosteric structural changes in the DNA binding domain of LHX3, induced by the ISL1:LHX3 interaction, may explain differences in sequence specificity of the different complexes. Interacts with LHX3. Interacts (via C-terminus) with POU4F2 (via C-terminus) isoform 1. Interacts with POU3F2. Interacts with POU4F3. Interacts (via N-terminal domain) with MLIP; the interaction represses ISL1 transactivator activity. Interacts with GCN5/KAT2A. Interactions of ISL1 with MLIP1 or KAT2A may be mutually exclusive. Post-translationally, ubiquitinated probably by WWP1 E3 ubiquitin ligase; ubiquitination is followed by protein degradation. Phosphorylated. As to expression, expressed in subsets of neurons of the adrenal medulla and dorsal root ganglion, inner nuclear and ganglion cell layers in the retina, the pineal and some regions of the brain.

The protein localises to the nucleus. DNA-binding transcriptional activator. Recognizes and binds to the consensus octamer binding site 5'-ATAATTAA-3' in promoter of target genes. Plays a fundamental role in the gene regulatory network essential for retinal ganglion cell (RGC) differentiation. Cooperates with the transcription factor POU4F2 to achieve maximal levels of expression of RGC target genes and RGC fate specification in the developing retina. Involved in the specification of motor neurons in cooperation with LHX3 and LDB1. Binds to insulin gene enhancer sequences. Essential for heart development. Marker of one progenitor cell population that give rise to the outflow tract, right ventricle, a subset of left ventricular cells, and a large number of atrial cells as well, its function is required for these progenitors to contribute to the heart. Controls the expression of FGF and BMP growth factors in this cell population and is required for proliferation and survival of cells within pharyngeal foregut endoderm and adjacent splanchnic mesoderm as well as for migration of cardiac progenitors into the heart. The chain is Insulin gene enhancer protein ISL-1 (ISL1) from Homo sapiens (Human).